Consider the following 147-residue polypeptide: MKRMMIVAALAALTTTTVAQAADPAAYVEYRKSVLSATSNYMKAIGITLKEDLAVPNQTADHAKAIASIMETLPAAFPEGTAGIAKTEAKAAIWKDFEAFKVASKKSQDAALELASAAETGDKAAIGAKLQALGGTCKACHKEFKAD.

The signal sequence occupies residues 1–21 (MKRMMIVAALAALTTTTVAQA). Residues Arg31, Thr87, Glu88, Cys137, Cys140, and His141 each contribute to the heme c site.

As to quaternary structure, homodimer. Post-translationally, binds 1 heme c group covalently per subunit.

Its function is as follows. Cytochrome c' is the most widely occurring bacterial c-type cytochrome. Cytochromes c' are high-spin proteins and the heme has no sixth ligand. Their exact function is not known. The chain is Cytochrome c' from Rhodospirillum rubrum (strain ATCC 11170 / ATH 1.1.1 / DSM 467 / LMG 4362 / NCIMB 8255 / S1).